Consider the following 987-residue polypeptide: Mitotic checkpoint serine/threonine-protein kinase bub-1 (987 aa).

2 disordered regions span residues 278–385 and 574–599; these read RRRH…TSKS and LAAN…KDSS. Residues 350–364 are compositionally biased toward basic and acidic residues; sequence ERLKIMTAGRKDGNP. The span at 368 to 380 shows a compositional bias: low complexity; it reads STSISSNYSTASA. Residues 575–587 show a composition bias toward polar residues; it reads AANQAVQPSVTES. The segment covering 588–599 has biased composition (basic and acidic residues); the sequence is SKPERSDPKDSS. The 298-residue stretch at 690–987 folds into the Protein kinase domain; it reads LHIQTLIGQG…EACDLAANQK (298 aa). Residues 696 to 704 and Lys-718 each bind ATP; that span reads IGQGGYAKV. The active-site Proton acceptor is Asp-814.

It belongs to the protein kinase superfamily. Ser/Thr protein kinase family. BUB1 subfamily. As to quaternary structure, interacts (via kinase domain) with mdf-1 (via coiled coil domain); the interaction recruits mdf-1 to unattached kinetochores during mitosis and between homologous chromosomes in early anaphase of meiosis I. May interact with bub-3; for localization at the kinetochore and the onset of anaphase.

Its subcellular location is the cytoplasm. It is found in the cell cortex. It localises to the nucleus. The protein resides in the chromosome. The protein localises to the centromere. Its subcellular location is the kinetochore. The catalysed reaction is L-seryl-[protein] + ATP = O-phospho-L-seryl-[protein] + ADP + H(+). It catalyses the reaction L-threonyl-[protein] + ATP = O-phospho-L-threonyl-[protein] + ADP + H(+). Its function is as follows. Serine/threonine-protein kinase essential for spindle-assembly checkpoint signaling. Plays a key role in the recruitment of the checkpoint proteins bub-3, mdf-1 and mdf-2 to unattached kinetochores. mdf-1 recruitment is independent of bub-1 kinase activity. Has a role in the correct kinetochore localization of the spindly-like protein spdl-1. In addition, during meiotic anaphase I, controls the recruitment of hcp-1/2 and klp-19 to the ring-shaped domain formed between chromosomes. Involved in chromosome alignment, chromosome homolog segregation and spindle assembly. In association with bub-3 at the kinetochore region of chromosomes, promotes the onset on anaphase independently from spindle checkpoint signaling and promotes the formation of stable end-on bipolar attachments of chromosomes. Plays a role in nuclear envelope breakdown. Required maternally during embryogenesis and in the zygote for the postembryonic development of several tissues including ventral cord neurons, gonad, intestine and seam cells. The chain is Mitotic checkpoint serine/threonine-protein kinase bub-1 from Caenorhabditis elegans.